Reading from the N-terminus, the 466-residue chain is Zinc finger protein ZIC 3 (466 aa).

Residues Asp65–Gly80 show a composition bias toward polar residues. Residues Asp65–Tyr103 are disordered. Residues Gly86 to Ala97 show a composition bias toward basic residues. Lys247 is covalently cross-linked (Glycyl lysine isopeptide (Lys-Gly) (interchain with G-Cter in SUMO2)). The C2H2-type 1; atypical zinc-finger motif lies at Leu250–His285. The C2H2-type 2; atypical zinc finger occupies His294–His321. Short sequence motifs (nuclear localization signal) lie at residues Cys296–His321 and Cys329–His351. C2H2-type zinc fingers lie at residues Phe327–His351, Phe357–His381, and Tyr387–His409. Residues Arg403–Val466 are disordered. Low complexity predominate over residues Ser411–Ser427. Over residues Ser434–Asn454 the composition is skewed to polar residues.

This sequence belongs to the GLI C2H2-type zinc-finger protein family. As to quaternary structure, interacts with KPNA1 and KPNA6. Interacts (via C2H2-type domains 3, 4 and 5) with GLI3; the interaction enhances its transcriptional activity. Interacts (via the C2H2-type domains 3, 4 and 5) with MDFIC (via the C2H2-type domains 3, 4 and 5); the interaction reduces its transcriptional activity. CNS. A high level expression is seen in the cerebellum.

It is found in the nucleus. The protein resides in the cytoplasm. Its function is as follows. Acts as a transcriptional activator. Required in the earliest stages in both axial midline development and left-right (LR) asymmetry specification. Binds to the minimal GLI-consensus sequence 5'-GGGTGGTC-3'. The sequence is that of Zinc finger protein ZIC 3 (Zic3) from Mus musculus (Mouse).